Reading from the N-terminus, the 132-residue chain is Ribosome-binding factor A (132 aa).

Residues 113-132 form a disordered region; it reads EANSTRAKDDDEADTPAKDD.

The protein belongs to the RbfA family. Monomer. Binds 30S ribosomal subunits, but not 50S ribosomal subunits or 70S ribosomes.

The protein localises to the cytoplasm. Functionally, one of several proteins that assist in the late maturation steps of the functional core of the 30S ribosomal subunit. Associates with free 30S ribosomal subunits (but not with 30S subunits that are part of 70S ribosomes or polysomes). Required for efficient processing of 16S rRNA. May interact with the 5'-terminal helix region of 16S rRNA. The sequence is that of Ribosome-binding factor A from Burkholderia cenocepacia (strain HI2424).